We begin with the raw amino-acid sequence, 421 residues long: MSKDIPPASDFLAILTERGFLHQCSDPAGLDEKAKSGGLIAYIGFDCTAPSLHVGSLVQIMMLRWLQKTGGKPIVLMGGGTTRVGDPSGKDESRKILTLEEIEANKQGIKQVFSKFVHFGEGKTDALMADNAEWLTALHYIDFLRDVGRHFSVNRMLSMDSVKLRLERDQELSFLEFNYMCCQAYDFVELHKRYGCQLQMGGSDQWGNIVTGIDLGRRMGTAQLYALTSPLLTTASGAKMGKTAKGAVWLDEAMLPVFDYWQFWRNCEDRDVGRFLKLFTELPLDEIARLEALQDAEINEAKKILATEATAMVHGREAAERAADTARQTFEEGVVAASLPSVILQTNEIPAEGLGILAAFAKAGLVNSTSEARRQIKGGGLRLNDQPITDEKAVITIEAIEAGAKLSLGRKKHVLLRLADG.

Residue tyrosine 42 participates in L-tyrosine binding. The 'HIGH' region motif lies at cysteine 47–serine 56. Residues tyrosine 179 and glutamine 183 each contribute to the L-tyrosine site. The short motif at lysine 239–threonine 243 is the 'KMSKS' region element. Residue lysine 242 coordinates ATP. The S4 RNA-binding domain occupies leucine 354 to alanine 419.

The protein belongs to the class-I aminoacyl-tRNA synthetase family. TyrS type 1 subfamily. As to quaternary structure, homodimer.

Its subcellular location is the cytoplasm. The enzyme catalyses tRNA(Tyr) + L-tyrosine + ATP = L-tyrosyl-tRNA(Tyr) + AMP + diphosphate + H(+). Its function is as follows. Catalyzes the attachment of tyrosine to tRNA(Tyr) in a two-step reaction: tyrosine is first activated by ATP to form Tyr-AMP and then transferred to the acceptor end of tRNA(Tyr). The sequence is that of Tyrosine--tRNA ligase from Beijerinckia indica subsp. indica (strain ATCC 9039 / DSM 1715 / NCIMB 8712).